Consider the following 366-residue polypeptide: 8-hydroxyquercetin 8-O-methyltransferase (366 aa).

Residues 207–210 (VGGG), 231–232 (DL), 251–252 (DM), and Lys265 contribute to the S-adenosyl-L-methionine site. Catalysis depends on His269, which acts as the Proton acceptor.

This sequence belongs to the class I-like SAM-binding methyltransferase superfamily. Cation-independent O-methyltransferase family. COMT subfamily. In terms of assembly, homodimer.

It carries out the reaction 3,3',4',5,7,8-hexahydroxyflavone + S-adenosyl-L-methionine = 3,3',4',5,7-pentahydroxy-8-methoxyflavone + S-adenosyl-L-homocysteine + H(+). It catalyses the reaction 4',7,8-trihydroxyflavone + S-adenosyl-L-methionine = 4',7-dihydroxy-8-methoxyflavone + S-adenosyl-L-homocysteine + H(+). The catalysed reaction is 8-hydroxy-7-methoxyflavone + S-adenosyl-L-methionine = 7,8-dimethoxyflavone + S-adenosyl-L-homocysteine + H(+). The protein operates within flavonoid metabolism. In terms of biological role, flavonoid 8-O-methyltransferase involved in the biosynthesis of polymethoxylated flavonoids natural products such as pebrellin, aroma compounds which contribute to the flavor of peppermint, and exhibit pharmacological activities such as anti-allergic, anti-oxidant, antibacterial, anti-proliferative, and anti-inflammatory effects. Catalyzes S-adenosylmethionine-dependent regioselective 8-O-methylation of flavonoids; active on various hydroxylated flavonoid substrates, including 7,8,3'4'-tetrahydroxy-flavone, 7,8,4'-trihydroxy-flavone and 8-hydroxy-flavone 7-methyl ether. This is 8-hydroxyquercetin 8-O-methyltransferase from Mentha piperita (Peppermint).